A 215-amino-acid polypeptide reads, in one-letter code: NADH-quinone oxidoreductase subunit C (215 aa).

This sequence belongs to the complex I 30 kDa subunit family. NDH-1 is composed of 14 different subunits. Subunits NuoB, C, D, E, F, and G constitute the peripheral sector of the complex.

Its subcellular location is the cell inner membrane. The catalysed reaction is a quinone + NADH + 5 H(+)(in) = a quinol + NAD(+) + 4 H(+)(out). Its function is as follows. NDH-1 shuttles electrons from NADH, via FMN and iron-sulfur (Fe-S) centers, to quinones in the respiratory chain. The immediate electron acceptor for the enzyme in this species is believed to be ubiquinone. Couples the redox reaction to proton translocation (for every two electrons transferred, four hydrogen ions are translocated across the cytoplasmic membrane), and thus conserves the redox energy in a proton gradient. This Dinoroseobacter shibae (strain DSM 16493 / NCIMB 14021 / DFL 12) protein is NADH-quinone oxidoreductase subunit C.